Here is a 348-residue protein sequence, read N- to C-terminus: NADH-quinone oxidoreductase subunit H (348 aa).

Helical transmembrane passes span L10–V30, G82–I102, V115–G135, I161–V181, F199–L219, L251–F271, I287–V307, and L322–L342.

The protein belongs to the complex I subunit 1 family. As to quaternary structure, NDH-1 is composed of 14 different subunits. Subunits NuoA, H, J, K, L, M, N constitute the membrane sector of the complex.

It is found in the cell inner membrane. The enzyme catalyses a quinone + NADH + 5 H(+)(in) = a quinol + NAD(+) + 4 H(+)(out). Functionally, NDH-1 shuttles electrons from NADH, via FMN and iron-sulfur (Fe-S) centers, to quinones in the respiratory chain. The immediate electron acceptor for the enzyme in this species is believed to be ubiquinone. Couples the redox reaction to proton translocation (for every two electrons transferred, four hydrogen ions are translocated across the cytoplasmic membrane), and thus conserves the redox energy in a proton gradient. This subunit may bind ubiquinone. This Bartonella tribocorum (strain CIP 105476 / IBS 506) protein is NADH-quinone oxidoreductase subunit H.